Here is a 302-residue protein sequence, read N- to C-terminus: Protein FdhE homolog (302 aa).

The protein belongs to the FdhE family.

Its subcellular location is the cytoplasm. Necessary for formate dehydrogenase activity. The sequence is that of Protein FdhE homolog from Haemophilus influenzae (strain PittEE).